Reading from the N-terminus, the 278-residue chain is Rhomboid protease GlpG (278 aa).

6 consecutive transmembrane segments (helical) span residues 95–115 (GPLT…MQIV), 143–163 (AFLH…WYLA), 170–190 (LGTG…GWGQ), 192–212 (LFSG…MGYV), 224–241 (ISLP…LVAG), and 245–267 (ILGL…LMAF). S202 acts as the Nucleophile in catalysis. H255 is an active-site residue.

Belongs to the peptidase S54 family.

Its subcellular location is the cell inner membrane. It carries out the reaction Cleaves type-1 transmembrane domains using a catalytic dyad composed of serine and histidine that are contributed by different transmembrane domains.. Its function is as follows. Rhomboid-type serine protease that catalyzes intramembrane proteolysis. The chain is Rhomboid protease GlpG from Yersinia enterocolitica serotype O:8 / biotype 1B (strain NCTC 13174 / 8081).